A 547-amino-acid polypeptide reads, in one-letter code: Chaperonin GroEL (547 aa).

Residues 30–33 (TLGP), Lys51, 87–91 (DGTTT), Gly415, and Asp495 each bind ATP.

This sequence belongs to the chaperonin (HSP60) family. As to quaternary structure, forms a cylinder of 14 subunits composed of two heptameric rings stacked back-to-back. Interacts with the co-chaperonin GroES.

Its subcellular location is the cytoplasm. It carries out the reaction ATP + H2O + a folded polypeptide = ADP + phosphate + an unfolded polypeptide.. In terms of biological role, together with its co-chaperonin GroES, plays an essential role in assisting protein folding. The GroEL-GroES system forms a nano-cage that allows encapsulation of the non-native substrate proteins and provides a physical environment optimized to promote and accelerate protein folding. The protein is Chaperonin GroEL of Bartonella quintana (strain Toulouse) (Rochalimaea quintana).